The following is a 380-amino-acid chain: Cytochrome b (380 aa).

Transmembrane regions (helical) follow at residues 34–54, 78–99, 114–134, and 179–199; these read FGSL…LLAM, WLIR…YFHI, WNTG…GYVL, and FFAL…IHLT. Residues histidine 84 and histidine 98 each contribute to the heme b site. 2 residues coordinate heme b: histidine 183 and histidine 197. Histidine 202 is a binding site for a ubiquinone. A run of 4 helical transmembrane segments spans residues 227–247, 289–309, 321–341, and 348–368; these read LKDI…ALFS, LGGV…PFLH, LSQL…WVGS, and FIII…VLFP.

The protein belongs to the cytochrome b family. In terms of assembly, the cytochrome bc1 complex contains 11 subunits: 3 respiratory subunits (MT-CYB, CYC1 and UQCRFS1), 2 core proteins (UQCRC1 and UQCRC2) and 6 low-molecular weight proteins (UQCRH/QCR6, UQCRB/QCR7, UQCRQ/QCR8, UQCR10/QCR9, UQCR11/QCR10 and a cleavage product of UQCRFS1). This cytochrome bc1 complex then forms a dimer. The cofactor is heme b.

The protein localises to the mitochondrion inner membrane. In terms of biological role, component of the ubiquinol-cytochrome c reductase complex (complex III or cytochrome b-c1 complex) that is part of the mitochondrial respiratory chain. The b-c1 complex mediates electron transfer from ubiquinol to cytochrome c. Contributes to the generation of a proton gradient across the mitochondrial membrane that is then used for ATP synthesis. This is Cytochrome b (MT-CYB) from Halobaena caerulea (Blue petrel).